Consider the following 64-residue polypeptide: Large ribosomal subunit protein eL37 (64 aa).

The C4-type zinc finger occupies 1–6; the sequence is GRCSAC. Residues Cys3 and Cys6 each coordinate Zn(2+).

Belongs to the eukaryotic ribosomal protein eL37 family. Requires Zn(2+) as cofactor.

Binds to the 23S rRNA. The sequence is that of Large ribosomal subunit protein eL37 (RPL37) from Solanum lycopersicum (Tomato).